Consider the following 154-residue polypeptide: Interleukin-2 (154 aa).

The N-terminal stretch at 1 to 20 (MYRMQLLSCIALSLALVTNS) is a signal peptide. An O-linked (GalNAc...) threonine glycan is attached at threonine 23. The cysteines at positions 78 and 126 are disulfide-linked.

The protein belongs to the IL-2 family.

It is found in the secreted. In terms of biological role, cytokine produced by activated CD4-positive helper T-cells and to a lesser extend activated CD8-positive T-cells and natural killer (NK) cells that plays pivotal roles in the immune response and tolerance. Binds to a receptor complex composed of either the high-affinity trimeric IL-2R (IL2RA/CD25, IL2RB/CD122 and IL2RG/CD132) or the low-affinity dimeric IL-2R (IL2RB and IL2RG). Interaction with the receptor leads to oligomerization and conformation changes in the IL-2R subunits resulting in downstream signaling starting with phosphorylation of JAK1 and JAK3. In turn, JAK1 and JAK3 phosphorylate the receptor to form a docking site leading to the phosphorylation of several substrates including STAT5. This process leads to activation of several pathways including STAT, phosphoinositide-3-kinase/PI3K and mitogen-activated protein kinase/MAPK pathways. Functions as a T-cell growth factor and can increase NK-cell cytolytic activity as well. Promotes strong proliferation of activated B-cells and subsequently immunoglobulin production. Plays a pivotal role in regulating the adaptive immune system by controlling the survival and proliferation of regulatory T-cells, which are required for the maintenance of immune tolerance. Moreover, participates in the differentiation and homeostasis of effector T-cell subsets, including Th1, Th2, Th17 as well as memory CD8-positive T-cells. The sequence is that of Interleukin-2 (IL2) from Macaca mulatta (Rhesus macaque).